The primary structure comprises 1070 residues: Carbamoyl phosphate synthase large chain (1070 aa).

A carboxyphosphate synthetic domain region spans residues 1 to 401; it reads MPKRDDIKTI…ALLKAVRSLE (401 aa). 12 residues coordinate ATP: Arg-129, Arg-169, Gly-175, Gly-176, Lys-208, Ile-210, Glu-215, Gly-241, Ile-242, His-243, Gln-284, and Glu-298. The ATP-grasp 1 domain maps to 133-327; it reads RDLMNELGEP…IAKLAAKIAV (195 aa). Mg(2+)-binding residues include Gln-284, Glu-298, and Asn-300. Mn(2+) contacts are provided by Gln-284, Glu-298, and Asn-300. Positions 402–546 are oligomerization domain; the sequence is IGADHLLLEE…YSTYEDENES (145 aa). Residues 547–929 are carbamoyl phosphate synthetic domain; it reads IRSSKESVIV…ALYKGFVASG (383 aa). In terms of domain architecture, ATP-grasp 2 spans 671–861; the sequence is EKALEILQIP…MANVATRVIL (191 aa). ATP contacts are provided by Arg-707, Arg-746, Val-748, Glu-752, Gly-777, Val-778, His-779, Ser-780, Gln-820, and Glu-832. Residues Gln-820, Glu-832, and Asn-834 each coordinate Mg(2+). Mn(2+) contacts are provided by Gln-820, Glu-832, and Asn-834. In terms of domain architecture, MGS-like spans 930 to 1070; it reads TTMHDYGTVL…SEVKQPKARV (141 aa). An allosteric domain region spans residues 930–1070; the sequence is TTMHDYGTVL…SEVKQPKARV (141 aa).

The protein belongs to the CarB family. In terms of assembly, composed of two chains; the small (or glutamine) chain promotes the hydrolysis of glutamine to ammonia, which is used by the large (or ammonia) chain to synthesize carbamoyl phosphate. Tetramer of heterodimers (alpha,beta)4. Mg(2+) is required as a cofactor. The cofactor is Mn(2+).

It carries out the reaction hydrogencarbonate + L-glutamine + 2 ATP + H2O = carbamoyl phosphate + L-glutamate + 2 ADP + phosphate + 2 H(+). The enzyme catalyses hydrogencarbonate + NH4(+) + 2 ATP = carbamoyl phosphate + 2 ADP + phosphate + 2 H(+). The protein operates within amino-acid biosynthesis; L-arginine biosynthesis; carbamoyl phosphate from bicarbonate: step 1/1. It functions in the pathway pyrimidine metabolism; UMP biosynthesis via de novo pathway; (S)-dihydroorotate from bicarbonate: step 1/3. Large subunit of the glutamine-dependent carbamoyl phosphate synthetase (CPSase). CPSase catalyzes the formation of carbamoyl phosphate from the ammonia moiety of glutamine, carbonate, and phosphate donated by ATP, constituting the first step of 2 biosynthetic pathways, one leading to arginine and/or urea and the other to pyrimidine nucleotides. The large subunit (synthetase) binds the substrates ammonia (free or transferred from glutamine from the small subunit), hydrogencarbonate and ATP and carries out an ATP-coupled ligase reaction, activating hydrogencarbonate by forming carboxy phosphate which reacts with ammonia to form carbamoyl phosphate. The chain is Carbamoyl phosphate synthase large chain from Listeria innocua serovar 6a (strain ATCC BAA-680 / CLIP 11262).